Here is a 590-residue protein sequence, read N- to C-terminus: Proline--tRNA ligase (590 aa).

It belongs to the class-II aminoacyl-tRNA synthetase family. ProS type 1 subfamily. Homodimer.

Its subcellular location is the cytoplasm. The catalysed reaction is tRNA(Pro) + L-proline + ATP = L-prolyl-tRNA(Pro) + AMP + diphosphate. Its function is as follows. Catalyzes the attachment of proline to tRNA(Pro) in a two-step reaction: proline is first activated by ATP to form Pro-AMP and then transferred to the acceptor end of tRNA(Pro). As ProRS can inadvertently accommodate and process non-cognate amino acids such as alanine and cysteine, to avoid such errors it has two additional distinct editing activities against alanine. One activity is designated as 'pretransfer' editing and involves the tRNA(Pro)-independent hydrolysis of activated Ala-AMP. The other activity is designated 'posttransfer' editing and involves deacylation of mischarged Ala-tRNA(Pro). The misacylated Cys-tRNA(Pro) is not edited by ProRS. This Clavibacter sepedonicus (Clavibacter michiganensis subsp. sepedonicus) protein is Proline--tRNA ligase.